Reading from the N-terminus, the 1038-residue chain is Pentatricopeptide repeat-containing protein At5g27270 (1038 aa).

Low complexity predominate over residues 23-38; it reads SRNSRISIKSSSSSSK. Positions 23 to 69 are disordered; sequence SRNSRISIKSSSSSSKVRPDPWSLSDGNPEKPKPRYERPKHPLSDDD. Residues 50–69 show a composition bias toward basic and acidic residues; it reads NPEKPKPRYERPKHPLSDDD. PPR repeat units lie at residues 187–221, 222–256, 257–291, 292–326, 327–361, 362–396, 397–431, 432–466, 467–501, 502–535, 536–570, 601–631, 634–668, 669–699, 703–737, 738–772, 773–807, 808–842, 843–877, 878–912, 913–947, 948–982, and 983–1017; these read SVVV…GCEP, DAVA…RILL, STSV…GVPP, NEFT…GFVP, EEVT…GIVP, SNYT…KIPA, DEVI…NLLA, DEKT…DIPL, SRFA…GLPD, ASSC…QVHF, DIEL…ARVK, DVMA…MFKT, GSSA…GLRM, EEET…AGES, GKSV…GCDP, GAVT…NIEL, DTVG…GVPC, SIQT…GLYL, DEKI…GIKP, GTPS…GRCT, DLST…GIPL, SHSH…GISP, and DSAC…SVED.

It belongs to the PPR family. P subfamily.

The protein is Pentatricopeptide repeat-containing protein At5g27270 (EMB976) of Arabidopsis thaliana (Mouse-ear cress).